The chain runs to 521 residues: 3,4-dihydroxyphenylacetaldehyde synthase (521 aa).

K306 carries the N6-(pyridoxal phosphate)lysine modification.

The protein belongs to the group II decarboxylase family. Requires pyridoxal 5'-phosphate as cofactor. Highly expressed in the cuticle and midgut. Low expression in the head and thorax.

It carries out the reaction L-dopa + O2 + H2O + H(+) = 3,4-dihydroxyphenylacetaldehyde + H2O2 + NH4(+) + CO2. Functionally, catalyzes the decarboxylation-oxidative deamination of L-3,4-dihydroxyphenylalanine (L-DOPA) to 3,4-dihydroxylphenylacetaldehyde (DHPAA). Involved in cuticle development. Probably responsible for the protein cross-linking during the development of flexible cuticles. This is 3,4-dihydroxyphenylacetaldehyde synthase from Aedes aegypti (Yellowfever mosquito).